The chain runs to 1161 residues: Immunoglobulin superfamily member 3 (1161 aa).

A signal peptide spans 1-16 (MGTAALLILLAGVSWA). The Extracellular portion of the chain corresponds to 17–1091 (QREVAIQPGP…LQSTICANDA (1075 aa)). 8 Ig-like C2-type domains span residues 18–135 (REVA…AKVN), 140–258 (PDTL…WFPL), 272–382 (PTDK…RGPS), 402–523 (PLRT…WQLL), 541–651 (FAVT…RETS), 674–796 (PRLQ…EETS), 806–930 (PDAN…WYRR), and 947–1063 (PQLQ…WYLL). 2 cysteine pairs are disulfide-bonded: cysteine 39/cysteine 117 and cysteine 164/cysteine 242. The EWI motif motif lies at 246-248 (EWI). 6 disulfide bridges follow: cysteine 298-cysteine 372, cysteine 428-cysteine 507, cysteine 562-cysteine 641, cysteine 697-cysteine 775, cysteine 831-cysteine 914, and cysteine 970-cysteine 1047. Residues 1092–1112 (LFYLVFFYPFPIFGILIITIL) form a helical membrane-spanning segment. Over 1113–1161 (LVRFRHRPTGKPGEGKNGVPLLWIKEPHLNYSPTCLEPPVLSIHPGTID) the chain is Cytoplasmic.

Its subcellular location is the membrane. In Xenopus tropicalis (Western clawed frog), this protein is Immunoglobulin superfamily member 3 (igsf3).